We begin with the raw amino-acid sequence, 294 residues long: Early 4 ORF6 protein (294 aa).

The Nuclear localization signal signature appears at 239-255; the sequence is ARRTRRLMLRAVRIIAE.

It belongs to the adenoviridae E4 30 to 34 kDa protein family. Interacts with E1B-55k.

The protein localises to the host nucleus. The protein resides in the host cytoplasm. In terms of biological role, plays a major role to prevent cellular inhibition of viral genome replication by nuclear bodies. Assembles an SCF-like E3 ubiquitin ligase complex based on the cellular proteins ELOB, ELOC, CUL5 and RBX1, in cooperation with viral E1B-55K. This viral RING-type ligase ubiquitinates cellular substrates prior to proteasomal degradation: p53/TP53, LIG4, MRE11-RAD50-NBS1 (MRN) complex, ITGA3, DAXX and BLM. The protein is Early 4 ORF6 protein of Homo sapiens (Human).